The primary structure comprises 220 residues: Peptidoglycan hydrolase gp5 (220 aa).

It belongs to the peptidase U40 family. As to quaternary structure, monomer.

Its subcellular location is the virion. Its function is as follows. Muralytic enzyme exposed to host peptidoglycan layer after membrane fusion during viral entry. Functions as an exolysin that cleaves the peptide bridge formed by meso-diaminopimelic acid and D-alanine. Also lyses the host cell late in infection to release the virions. The polypeptide is Peptidoglycan hydrolase gp5 (P5) (Pseudomonas savastanoi pv. phaseolicola (Pseudomonas syringae pv. phaseolicola)).